Reading from the N-terminus, the 135-residue chain is Putative pre-16S rRNA nuclease (135 aa).

This sequence belongs to the YqgF nuclease family.

The protein resides in the cytoplasm. Functionally, could be a nuclease involved in processing of the 5'-end of pre-16S rRNA. The sequence is that of Putative pre-16S rRNA nuclease from Clostridium novyi (strain NT).